Consider the following 205-residue polypeptide: GTP cyclohydrolase-2 (205 aa).

Residue 49 to 53 (RLHSE) coordinates GTP. Zn(2+) is bound by residues Cys-54, Cys-65, and Cys-67. Residues Gln-70, 92 to 94 (EGR), and Thr-114 contribute to the GTP site. Asp-126 (proton acceptor) is an active-site residue. The Nucleophile role is filled by Arg-128. Residues Thr-149 and Lys-154 each contribute to the GTP site.

Belongs to the GTP cyclohydrolase II family. Zn(2+) serves as cofactor.

It carries out the reaction GTP + 4 H2O = 2,5-diamino-6-hydroxy-4-(5-phosphoribosylamino)-pyrimidine + formate + 2 phosphate + 3 H(+). It functions in the pathway cofactor biosynthesis; riboflavin biosynthesis; 5-amino-6-(D-ribitylamino)uracil from GTP: step 1/4. Its function is as follows. Catalyzes the conversion of GTP to 2,5-diamino-6-ribosylamino-4(3H)-pyrimidinone 5'-phosphate (DARP), formate and pyrophosphate. The sequence is that of GTP cyclohydrolase-2 from Pseudomonas entomophila (strain L48).